The primary structure comprises 32 residues: Photosystem II reaction center protein Z (32 aa).

A helical transmembrane segment spans residues 12 to 32 (FGAAAWIGLVLLVGTLYYFVV).

This sequence belongs to the PsbZ family. As to quaternary structure, PSII is composed of 1 copy each of membrane proteins PsbA, PsbB, PsbC, PsbD, PsbE, PsbF, PsbH, PsbI, PsbJ, PsbK, PsbL, PsbM, PsbT, PsbY, PsbZ, Psb30/Ycf12, at least 3 peripheral proteins of the oxygen-evolving complex and a large number of cofactors. It forms dimeric complexes.

The protein resides in the plastid. Its subcellular location is the chloroplast thylakoid membrane. In terms of biological role, may control the interaction of photosystem II (PSII) cores with the light-harvesting antenna, regulates electron flow through the 2 photosystem reaction centers. PSII is a light-driven water plastoquinone oxidoreductase, using light energy to abstract electrons from H(2)O, generating a proton gradient subsequently used for ATP formation. The polypeptide is Photosystem II reaction center protein Z (Euglena granulata).